We begin with the raw amino-acid sequence, 622 residues long: Chaperone protein HscA homolog (622 aa).

It belongs to the heat shock protein 70 family.

Chaperone involved in the maturation of iron-sulfur cluster-containing proteins. Has a low intrinsic ATPase activity which is markedly stimulated by HscB. The protein is Chaperone protein HscA homolog of Burkholderia cenocepacia (strain HI2424).